Reading from the N-terminus, the 61-residue chain is MAQLKITLTRSAAHRLPKQRKIVKELGLARVNSSVIKPDNAATRGAIFQISHLVSVEEIKD.

It belongs to the universal ribosomal protein uL30 family. In terms of assembly, part of the 50S ribosomal subunit.

The sequence is that of Large ribosomal subunit protein uL30 from Lacticaseibacillus casei (strain BL23) (Lactobacillus casei).